The primary structure comprises 130 residues: uncharacterized protein (130 aa).

At Met-1 the chain carries N-acetylmethionine.

As to quaternary structure, homotetramer.

This is an uncharacterized protein from Arabidopsis thaliana (Mouse-ear cress).